The primary structure comprises 117 residues: Immunoglobulin heavy variable 1-84 (117 aa).

Residues 1–19 form the signal peptide; the sequence is MGWSWIFLFLLSGTAGVHC. A framework-1 region spans residues 20–49; that stretch reads QIQLQQSGPELVKPGASVKISCKASGYTFT. An Ig-like domain is found at 31 to 117; it reads VKPGASVKIS…EDSAVYFCAR (87 aa). Cys-41 and Cys-115 are joined by a disulfide. The tract at residues 50–54 is complementarity-determining-1; it reads DYYIN. The tract at residues 55–68 is framework-2; it reads WVKQRPGQGLEWIG. The complementarity-determining-2 stretch occupies residues 69–85; the sequence is WIYPGSGNTKYNEKFKG. Positions 86-117 are framework-3; it reads KATLTVDTSSSTAYMQLSSLTSEDSAVYFCAR.

In Mus musculus (Mouse), this protein is Immunoglobulin heavy variable 1-84.